The primary structure comprises 134 residues: Cytochrome b5 isoform E (134 aa).

Residues 5-81 (RKVLSFEEVS…MDKYFIGEID (77 aa)) form the Cytochrome b5 heme-binding domain. 2 residues coordinate heme: H40 and H64. A helical transmembrane segment spans residues 107–127 (FIIKILQFLVPILILGLALVV). The short motif at 128-134 (RHYTKKD) is the AKR2A-binding sequence (ABS) required for endoplasmic reticulum membrane targeting element.

Belongs to the cytochrome b5 family. As to quaternary structure, interacts with CER1, BI-1, FAH1 and FAH2. Interacts with AKR2A. As to expression, expressed in roots, stems, leaves, flowers and siliques.

It localises to the cell membrane. The protein resides in the endoplasmic reticulum membrane. Membrane bound hemoprotein which function as an electron carrier for several membrane bound oxygenases, including fatty acid desaturases. In Arabidopsis thaliana (Mouse-ear cress), this protein is Cytochrome b5 isoform E (CYTB5-E).